We begin with the raw amino-acid sequence, 186 residues long: Adenine phosphoribosyltransferase (186 aa).

132-136 contributes to the AMP binding site; it reads ATGGS.

The protein belongs to the purine/pyrimidine phosphoribosyltransferase family. As to quaternary structure, homodimer. Mg(2+) is required as a cofactor.

It localises to the cytoplasm. The protein localises to the nucleus. It carries out the reaction AMP + diphosphate = 5-phospho-alpha-D-ribose 1-diphosphate + adenine. The protein operates within purine metabolism; AMP biosynthesis via salvage pathway; AMP from adenine: step 1/1. In terms of biological role, catalyzes a salvage reaction resulting in the formation of AMP, that is energically less costly than de novo synthesis. The chain is Adenine phosphoribosyltransferase (APT1) from Debaryomyces hansenii (strain ATCC 36239 / CBS 767 / BCRC 21394 / JCM 1990 / NBRC 0083 / IGC 2968) (Yeast).